The chain runs to 164 residues: MTETQVTWLTQESHDRLKNELDQLIANRPVIAAEINERREEGDLKENGGYHAAREEQGQQEARIRQLQELLNSAKVGEAPTQSGVALPGSVVKVYYDGDESDTETFLIATREEGARDAKLEVYSPNSPLGGALLEAKVGDTREYNLPNGSTMKVTLLSAEPYHS.

Positions 15-76 form a coiled coil; sequence DRLKNELDQL…LQELLNSAKV (62 aa).

This sequence belongs to the GreA/GreB family.

In terms of biological role, necessary for efficient RNA polymerase transcription elongation past template-encoded arresting sites. The arresting sites in DNA have the property of trapping a certain fraction of elongating RNA polymerases that pass through, resulting in locked ternary complexes. Cleavage of the nascent transcript by cleavage factors such as GreA or GreB allows the resumption of elongation from the new 3'terminus. GreA releases sequences of 2 to 3 nucleotides. In Rhodococcus erythropolis (strain PR4 / NBRC 100887), this protein is Transcription elongation factor GreA.